We begin with the raw amino-acid sequence, 540 residues long: Chaperonin GroEL (540 aa).

Residues 29–32 (TIGP), 86–90 (DGTTT), Gly413, 477–479 (NAA), and Asp493 contribute to the ATP site.

This sequence belongs to the chaperonin (HSP60) family. Forms a cylinder of 14 subunits composed of two heptameric rings stacked back-to-back. Interacts with the co-chaperonin GroES.

Its subcellular location is the cytoplasm. It carries out the reaction ATP + H2O + a folded polypeptide = ADP + phosphate + an unfolded polypeptide.. In terms of biological role, together with its co-chaperonin GroES, plays an essential role in assisting protein folding. The GroEL-GroES system forms a nano-cage that allows encapsulation of the non-native substrate proteins and provides a physical environment optimized to promote and accelerate protein folding. In Lactobacillus helveticus (strain DPC 4571), this protein is Chaperonin GroEL.